Consider the following 371-residue polypeptide: Deoxyguanosinetriphosphate triphosphohydrolase-like protein (371 aa).

Residues 62 to 200 (RITHSIEVAQ…SAISDDIAYN (139 aa)) form the HD domain.

Belongs to the dGTPase family. Type 2 subfamily.

This chain is Deoxyguanosinetriphosphate triphosphohydrolase-like protein, found in Pelagibacter ubique (strain HTCC1062).